We begin with the raw amino-acid sequence, 589 residues long: UvrABC system protein C (589 aa).

The GIY-YIG domain occupies H14–M91.

This sequence belongs to the UvrC family. Interacts with UvrB in an incision complex.

It localises to the cytoplasm. Its function is as follows. The UvrABC repair system catalyzes the recognition and processing of DNA lesions. UvrC both incises the 5' and 3' sides of the lesion. The N-terminal half is responsible for the 3' incision and the C-terminal half is responsible for the 5' incision. The protein is UvrABC system protein C of Malacoplasma penetrans (strain HF-2) (Mycoplasma penetrans).